The chain runs to 145 residues: Glycine-rich protein (145 aa).

An N-terminal signal peptide occupies residues 1–19 (MKLTLAVVVVFAYIATTNA).

In terms of tissue distribution, component of the acid-insoluble and acid-soluble organic matrix of calcified layers of the shell (at protein level).

It localises to the secreted. The sequence is that of Glycine-rich protein from Lottia gigantea (Giant owl limpet).